Consider the following 491-residue polypeptide: Protein nucleotidyltransferase YdiU (491 aa).

Positions 94, 96, 97, 117, 129, 130, 180, and 187 each coordinate ATP. The active-site Proton acceptor is the Asp-256. Mg(2+) is bound by residues Asn-257 and Asp-266. Asp-266 serves as a coordination point for ATP.

The protein belongs to the SELO family. Mg(2+) is required as a cofactor. The cofactor is Mn(2+).

The enzyme catalyses L-seryl-[protein] + ATP = 3-O-(5'-adenylyl)-L-seryl-[protein] + diphosphate. The catalysed reaction is L-threonyl-[protein] + ATP = 3-O-(5'-adenylyl)-L-threonyl-[protein] + diphosphate. It catalyses the reaction L-tyrosyl-[protein] + ATP = O-(5'-adenylyl)-L-tyrosyl-[protein] + diphosphate. It carries out the reaction L-histidyl-[protein] + UTP = N(tele)-(5'-uridylyl)-L-histidyl-[protein] + diphosphate. The enzyme catalyses L-seryl-[protein] + UTP = O-(5'-uridylyl)-L-seryl-[protein] + diphosphate. The catalysed reaction is L-tyrosyl-[protein] + UTP = O-(5'-uridylyl)-L-tyrosyl-[protein] + diphosphate. In terms of biological role, nucleotidyltransferase involved in the post-translational modification of proteins. It can catalyze the addition of adenosine monophosphate (AMP) or uridine monophosphate (UMP) to a protein, resulting in modifications known as AMPylation and UMPylation. In Clostridium botulinum (strain Loch Maree / Type A3), this protein is Protein nucleotidyltransferase YdiU.